We begin with the raw amino-acid sequence, 227 residues long: MSADDQKRISGEAAAELVENGMVVGLGTGSTAAWFVKALAARGLKDIRGVPTSDATAALARELGIPLAALDDVKTVDLTVDGADEIGPGLSLIKGGGAALLREKLVWEASTRCVVIADAAKRVPALGKFPLPIEVVRFGHVHTGYRLADIAAEFDLPPPRLRTAERGMVVTDGGNLIYDMASGKIEDPTALAAALKSVTGVVDHGLFLDLADEALVGTDEGVVRLQP.

Residues 28–31 (TGST), 81–84 (DGAD), and 94–97 (KGGG) contribute to the substrate site. Catalysis depends on Glu103, which acts as the Proton acceptor. Residue Lys121 participates in substrate binding.

Belongs to the ribose 5-phosphate isomerase family. In terms of assembly, homodimer.

The enzyme catalyses aldehydo-D-ribose 5-phosphate = D-ribulose 5-phosphate. It participates in carbohydrate degradation; pentose phosphate pathway; D-ribose 5-phosphate from D-ribulose 5-phosphate (non-oxidative stage): step 1/1. Functionally, catalyzes the reversible conversion of ribose-5-phosphate to ribulose 5-phosphate. This is Ribose-5-phosphate isomerase A from Caulobacter vibrioides (strain ATCC 19089 / CIP 103742 / CB 15) (Caulobacter crescentus).